The following is a 377-amino-acid chain: Geranylgeranyl transferase type-1 subunit beta (377 aa).

PFTB repeat units follow at residues 144–186 (KEAC…YMLN), 193–234 (MKKA…CLMG), 245–284 (LNRIKRWCIMRQQNGYHGRPNKPVDTCYSFWVGATLKLLK), and 291–333 (FEKN…SLME). Geranylgeranyl diphosphate-binding positions include 219–221 (HGG) and 263–266 (RPNK). D269 and C271 together coordinate Zn(2+). Position 272-275 (272-275 (YSFW)) interacts with geranylgeranyl diphosphate. H321 lines the Zn(2+) pocket.

This sequence belongs to the protein prenyltransferase subunit beta family. As to quaternary structure, heterodimer of FNTA and PGGT1B. PGGT1B mediates interaction with substrate peptides. The cofactor is Zn(2+). Requires Mg(2+) as cofactor.

The enzyme catalyses geranylgeranyl diphosphate + L-cysteinyl-[protein] = S-geranylgeranyl-L-cysteinyl-[protein] + diphosphate. Catalyzes the transfer of a geranylgeranyl moiety from geranylgeranyl diphosphate to a cysteine at the fourth position from the C-terminus of proteins with the C-terminal sequence Cys-aliphatic-aliphatic-X. Known substrates include RAC1, RAC2, RAP1A and RAP1B. The protein is Geranylgeranyl transferase type-1 subunit beta (Pggt1b) of Rattus norvegicus (Rat).